We begin with the raw amino-acid sequence, 118 residues long: Large ribosomal subunit protein uL22 (118 aa).

The protein belongs to the universal ribosomal protein uL22 family. Part of the 50S ribosomal subunit.

Functionally, this protein binds specifically to 23S rRNA; its binding is stimulated by other ribosomal proteins, e.g. L4, L17, and L20. It is important during the early stages of 50S assembly. It makes multiple contacts with different domains of the 23S rRNA in the assembled 50S subunit and ribosome. In terms of biological role, the globular domain of the protein is located near the polypeptide exit tunnel on the outside of the subunit, while an extended beta-hairpin is found that lines the wall of the exit tunnel in the center of the 70S ribosome. The polypeptide is Large ribosomal subunit protein uL22 (Thermomicrobium roseum (strain ATCC 27502 / DSM 5159 / P-2)).